The primary structure comprises 467 residues: Asparagine--tRNA ligase (467 aa).

It belongs to the class-II aminoacyl-tRNA synthetase family. Homodimer.

The protein localises to the cytoplasm. The enzyme catalyses tRNA(Asn) + L-asparagine + ATP = L-asparaginyl-tRNA(Asn) + AMP + diphosphate + H(+). This Pasteurella multocida (strain Pm70) protein is Asparagine--tRNA ligase.